A 99-amino-acid polypeptide reads, in one-letter code: Large ribosomal subunit protein bL21 (99 aa).

The protein belongs to the bacterial ribosomal protein bL21 family. Part of the 50S ribosomal subunit. Contacts protein L20.

Functionally, this protein binds to 23S rRNA in the presence of protein L20. The sequence is that of Large ribosomal subunit protein bL21 from Mycoplasma mobile (strain ATCC 43663 / 163K / NCTC 11711) (Mesomycoplasma mobile).